A 252-amino-acid chain; its full sequence is tRNA (guanine-N(7)-)-methyltransferase (252 aa).

Positions 80, 105, 132, and 155 each coordinate S-adenosyl-L-methionine. Asp155 is a catalytic residue. Substrate is bound by residues Lys159, Asp191, and 231-234; that span reads TKFE.

This sequence belongs to the class I-like SAM-binding methyltransferase superfamily. TrmB family.

It carries out the reaction guanosine(46) in tRNA + S-adenosyl-L-methionine = N(7)-methylguanosine(46) in tRNA + S-adenosyl-L-homocysteine. It functions in the pathway tRNA modification; N(7)-methylguanine-tRNA biosynthesis. Functionally, catalyzes the formation of N(7)-methylguanine at position 46 (m7G46) in tRNA. The polypeptide is tRNA (guanine-N(7)-)-methyltransferase (Actinobacillus succinogenes (strain ATCC 55618 / DSM 22257 / CCUG 43843 / 130Z)).